We begin with the raw amino-acid sequence, 184 residues long: Large ribosomal subunit protein uL22 (184 aa).

This sequence belongs to the universal ribosomal protein uL22 family.

The chain is Large ribosomal subunit protein uL22 (RPL17) from Yarrowia lipolytica (strain CLIB 122 / E 150) (Yeast).